The chain runs to 619 residues: Chaperone protein HscA homolog (619 aa).

The protein belongs to the heat shock protein 70 family.

Its function is as follows. Chaperone involved in the maturation of iron-sulfur cluster-containing proteins. Has a low intrinsic ATPase activity which is markedly stimulated by HscB. The chain is Chaperone protein HscA homolog from Pseudomonas aeruginosa (strain LESB58).